An 88-amino-acid chain; its full sequence is DNA-directed RNA polymerase subunit omega (88 aa).

The protein belongs to the RNA polymerase subunit omega family. The RNAP catalytic core consists of 2 alpha, 1 beta, 1 beta' and 1 omega subunit. When a sigma factor is associated with the core the holoenzyme is formed, which can initiate transcription.

It carries out the reaction RNA(n) + a ribonucleoside 5'-triphosphate = RNA(n+1) + diphosphate. In terms of biological role, promotes RNA polymerase assembly. Latches the N- and C-terminal regions of the beta' subunit thereby facilitating its interaction with the beta and alpha subunits. This chain is DNA-directed RNA polymerase subunit omega, found in Yersinia pestis (strain Pestoides F).